A 939-amino-acid polypeptide reads, in one-letter code: Translation initiation factor IF-2 (939 aa).

Residues 48–355 (KFAPAPKVEN…KPEKKEKEEE (308 aa)) form a disordered region. Low complexity predominate over residues 79–93 (QQNQAPKQPQQGTQN). Positions 114-130 (SRDKNSRRDNNNRDGQR) are enriched in basic and acidic residues. The segment covering 131–257 (DNNGGYRNND…NNDRNNNGGF (127 aa)) has biased composition (low complexity). The span at 287–355 (RNNDRRDSAP…KPEKKEKEEE (69 aa)) shows a compositional bias: basic and acidic residues. Positions 440–609 (PRPPVVCVMG…LLTAEVNELK (170 aa)) constitute a tr-type G domain. The interval 449–456 (GHVDHGKT) is G1. GTP is bound at residue 449-456 (GHVDHGKT). The segment at 474–478 (GITQK) is G2. Residues 495 to 498 (DTPG) form a G3 region. GTP contacts are provided by residues 495–499 (DTPGH) and 549–552 (NKID). The interval 549–552 (NKID) is G4. Residues 585-587 (SAH) are G5.

Belongs to the TRAFAC class translation factor GTPase superfamily. Classic translation factor GTPase family. IF-2 subfamily.

Its subcellular location is the cytoplasm. In terms of biological role, one of the essential components for the initiation of protein synthesis. Protects formylmethionyl-tRNA from spontaneous hydrolysis and promotes its binding to the 30S ribosomal subunits. Also involved in the hydrolysis of GTP during the formation of the 70S ribosomal complex. The chain is Translation initiation factor IF-2 from Lachnospira eligens (strain ATCC 27750 / DSM 3376 / VPI C15-48 / C15-B4) (Eubacterium eligens).